The primary structure comprises 402 residues: F-box/kelch-repeat protein At4g39590 (402 aa).

Residues 1–14 show a composition bias toward low complexity; it reads MFPMSSTSRSSAAN. Positions 1–37 are disordered; sequence MFPMSSTSRSSAANNRKDPPRKKNKETPSPVTREPTS. The segment covering 27–37 has biased composition (polar residues); it reads TPSPVTREPTS. In terms of domain architecture, F-box spans 35 to 81; the sequence is PTSIDSLPNDLLLNCFARVSRMYYPALSRVSKRFRSIVTSPEIYNTR. 4 Kelch repeats span residues 143–198, 199–246, 255–300, and 302–341; these read NIYR…VVDG, KIYV…YRRA, KLYL…LFYW, and QGVF…DLGG.

The protein is F-box/kelch-repeat protein At4g39590 of Arabidopsis thaliana (Mouse-ear cress).